Here is a 24-residue protein sequence, read N- to C-terminus: Hyaluronidase (24 aa).

In terms of tissue distribution, expressed by the venom gland.

It localises to the secreted. It catalyses the reaction Random hydrolysis of (1-&gt;4)-linkages between N-acetyl-beta-D-glucosamine and D-glucuronate residues in hyaluronate.. Functionally, possesses high activity against hyaluronan in vitro. In Tityus stigmurus (Brazilian scorpion), this protein is Hyaluronidase.